Here is a 1416-residue protein sequence, read N- to C-terminus: DNA-directed RNA polymerase subunit beta' (1416 aa).

Residues cysteine 71, cysteine 73, cysteine 86, and cysteine 89 each contribute to the Zn(2+) site. Residues aspartate 461, aspartate 463, and aspartate 465 each contribute to the Mg(2+) site. The Zn(2+) site is built by cysteine 815, cysteine 889, cysteine 896, and cysteine 899.

This sequence belongs to the RNA polymerase beta' chain family. The RNAP catalytic core consists of 2 alpha, 1 beta, 1 beta' and 1 omega subunit. When a sigma factor is associated with the core the holoenzyme is formed, which can initiate transcription. Requires Mg(2+) as cofactor. The cofactor is Zn(2+).

The enzyme catalyses RNA(n) + a ribonucleoside 5'-triphosphate = RNA(n+1) + diphosphate. Functionally, DNA-dependent RNA polymerase catalyzes the transcription of DNA into RNA using the four ribonucleoside triphosphates as substrates. This Haemophilus influenzae (strain PittGG) protein is DNA-directed RNA polymerase subunit beta'.